The sequence spans 340 residues: Phenylalanine--tRNA ligase alpha subunit (340 aa).

E251 contributes to the Mg(2+) binding site.

The protein belongs to the class-II aminoacyl-tRNA synthetase family. Phe-tRNA synthetase alpha subunit type 1 subfamily. As to quaternary structure, tetramer of two alpha and two beta subunits. The cofactor is Mg(2+).

It is found in the cytoplasm. The enzyme catalyses tRNA(Phe) + L-phenylalanine + ATP = L-phenylalanyl-tRNA(Phe) + AMP + diphosphate + H(+). This Porphyromonas gingivalis (strain ATCC 33277 / DSM 20709 / CIP 103683 / JCM 12257 / NCTC 11834 / 2561) protein is Phenylalanine--tRNA ligase alpha subunit.